The primary structure comprises 37 residues: Cytochrome b6-f complex subunit 5 (37 aa).

The helical transmembrane segment at 5-25 threads the bilayer; the sequence is LLSGIVLGLIPITLFGLLVAA.

This sequence belongs to the PetG family. The 4 large subunits of the cytochrome b6-f complex are cytochrome b6, subunit IV (17 kDa polypeptide, PetD), cytochrome f and the Rieske protein, while the 4 small subunits are PetG, PetL, PetM and PetN. The complex functions as a dimer.

It localises to the plastid. The protein localises to the chloroplast thylakoid membrane. Component of the cytochrome b6-f complex, which mediates electron transfer between photosystem II (PSII) and photosystem I (PSI), cyclic electron flow around PSI, and state transitions. PetG is required for either the stability or assembly of the cytochrome b6-f complex. The protein is Cytochrome b6-f complex subunit 5 of Pyropia yezoensis (Susabi-nori).